Here is a 358-residue protein sequence, read N- to C-terminus: Alanine racemase (358 aa).

Lys35 acts as the Proton acceptor; specific for D-alanine in catalysis. Position 35 is an N6-(pyridoxal phosphate)lysine (Lys35). Arg130 is a binding site for substrate. Tyr255 functions as the Proton acceptor; specific for L-alanine in the catalytic mechanism. Met303 contacts substrate.

It belongs to the alanine racemase family. Pyridoxal 5'-phosphate is required as a cofactor.

The enzyme catalyses L-alanine = D-alanine. The protein operates within amino-acid biosynthesis; D-alanine biosynthesis; D-alanine from L-alanine: step 1/1. Catalyzes the interconversion of L-alanine and D-alanine. May also act on other amino acids. The sequence is that of Alanine racemase (alr) from Shewanella baltica (strain OS185).